We begin with the raw amino-acid sequence, 146 residues long: Large ribosomal subunit protein uL15 (146 aa).

Positions 1 to 58 (MNLSELRPAPGARKKPTRKGQGIGSGLGKTAGKGHKGQNARSGGGVRPGFEGGQMPLQ) are disordered. Gly residues-rich tracts occupy residues 21–31 (QGIGSGLGKTA) and 42–52 (SGGGVRPGFEG).

Belongs to the universal ribosomal protein uL15 family. As to quaternary structure, part of the 50S ribosomal subunit.

In terms of biological role, binds to the 23S rRNA. The sequence is that of Large ribosomal subunit protein uL15 from Desulforamulus reducens (strain ATCC BAA-1160 / DSM 100696 / MI-1) (Desulfotomaculum reducens).